A 148-amino-acid chain; its full sequence is C-C motif chemokine 2 (148 aa).

The first 23 residues, 1 to 23 (MQVPVMLLGLLFTVAGWSIHVLA), serve as a signal peptide directing secretion. Gln-24 is modified (pyrrolidone carboxylic acid). 2 disulfide bridges follow: Cys-34–Cys-59 and Cys-35–Cys-75. The N-linked (GlcNAc...) asparagine glycan is linked to Asn-126.

This sequence belongs to the intercrine beta (chemokine CC) family. Monomer or homodimer; in equilibrium. Is tethered on endothelial cells by glycosaminoglycan (GAG) side chains of proteoglycans. Interacts with TNFAIP6 (via Link domain). In terms of processing, processing at the N-terminus can regulate receptor and target cell selectivity. Deletion of the N-terminal residue converts it from an activator of basophil to an eosinophil chemoattractant. N-Glycosylated.

It localises to the secreted. Acts as a ligand for C-C chemokine receptor CCR2. Signals through binding and activation of CCR2 and induces a strong chemotactic response and mobilization of intracellular calcium ions. Exhibits a chemotactic activity for monocytes and basophils but not neutrophils or eosinophils. Plays an important role in mediating peripheral nerve injury-induced neuropathic pain. Increases NMDA-mediated synaptic transmission in both dopamine D1 and D2 receptor-containing neurons, which may be caused by MAPK/ERK-dependent phosphorylation of GRIN2B/NMDAR2B. The polypeptide is C-C motif chemokine 2 (Ccl2) (Mus musculus (Mouse)).